The sequence spans 229 residues: NAD(P)H-quinone oxidoreductase subunit K, chloroplastic (229 aa).

Cys-43, Cys-44, Cys-108, and Cys-139 together coordinate [4Fe-4S] cluster.

Belongs to the complex I 20 kDa subunit family. In terms of assembly, NDH is composed of at least 16 different subunits, 5 of which are encoded in the nucleus. [4Fe-4S] cluster serves as cofactor.

Its subcellular location is the plastid. The protein localises to the chloroplast thylakoid membrane. It catalyses the reaction a plastoquinone + NADH + (n+1) H(+)(in) = a plastoquinol + NAD(+) + n H(+)(out). The enzyme catalyses a plastoquinone + NADPH + (n+1) H(+)(in) = a plastoquinol + NADP(+) + n H(+)(out). In terms of biological role, NDH shuttles electrons from NAD(P)H:plastoquinone, via FMN and iron-sulfur (Fe-S) centers, to quinones in the photosynthetic chain and possibly in a chloroplast respiratory chain. The immediate electron acceptor for the enzyme in this species is believed to be plastoquinone. Couples the redox reaction to proton translocation, and thus conserves the redox energy in a proton gradient. The chain is NAD(P)H-quinone oxidoreductase subunit K, chloroplastic from Piper cenocladum (Ant piper).